We begin with the raw amino-acid sequence, 992 residues long: UPF0182 protein MT3285 (992 aa).

A run of 7 helical transmembrane segments spans residues 17–39, 59–81, 113–135, 169–191, 212–229, 255–277, and 284–306; these read RILI…LIDA, LATR…FGGL, LVGI…SYWA, LMLS…AHYI, LVSL…AYWL, VLPA…FSAI, and IPAI…WPLI. The interval 906-938 is disordered; that stretch reads PTEAAVPPSPAANPPPPASGPQPPPVTAAPPVP. Over residues 912–938 the composition is skewed to pro residues; sequence PPSPAANPPPPASGPQPPPVTAAPPVP.

This sequence belongs to the UPF0182 family.

Its subcellular location is the cell membrane. This Mycobacterium tuberculosis (strain CDC 1551 / Oshkosh) protein is UPF0182 protein MT3285.